Here is a 554-residue protein sequence, read N- to C-terminus: Phenylalanine--tRNA ligase beta subunit (554 aa).

In terms of domain architecture, B5 spans 276 to 351; it reads LTPKSRMISV…INYGYEKFEG (76 aa). Residues Asp-329, Asp-335, Glu-338, and Glu-339 each coordinate Mg(2+).

This sequence belongs to the phenylalanyl-tRNA synthetase beta subunit family. Type 2 subfamily. As to quaternary structure, tetramer of two alpha and two beta subunits. It depends on Mg(2+) as a cofactor.

The protein resides in the cytoplasm. The catalysed reaction is tRNA(Phe) + L-phenylalanine + ATP = L-phenylalanyl-tRNA(Phe) + AMP + diphosphate + H(+). The polypeptide is Phenylalanine--tRNA ligase beta subunit (Methanococcus maripaludis (strain C6 / ATCC BAA-1332)).